Here is a 106-residue protein sequence, read N- to C-terminus: Iron-sulfur cluster assembly protein CyaY (106 aa).

It belongs to the frataxin family.

Functionally, involved in iron-sulfur (Fe-S) cluster assembly. May act as a regulator of Fe-S biogenesis. In Salmonella typhimurium (strain LT2 / SGSC1412 / ATCC 700720), this protein is Iron-sulfur cluster assembly protein CyaY.